Reading from the N-terminus, the 541-residue chain is MKLLMLAFVFLLALATCKGDEFVCEENEPFTCNQTKLFNSGNFEKGFIFGVASSAYQVEGGRGRGLNVWDSFTHRFPEKGGADLGNGDTTCDSYTLWQKDIDVMDELNSTGYRFSIAWSRLLPKGKRSRGVNPGAIKYYNGLIDGLVAKNMTPFVTLFHWDLPQTLQDEYNGFLNKTIVDDFKDYADLCFELFGDRVKNWITINQLYTVPTRGYALGTDAPGRCSPKIDVRCPGGNSSTEPYIVAHNQLLAHAAAVDVYRTKYKDDQKGMIGPVMITRWFLPFDHSQESKDATERAKIFFHGWFMGPLTEGKYPDIMREYVGDRLPEFSETEAALVKGSYDFLGLNYYVTQYAQNNQTIVPSDVHTALMDSRTTLTSKNATGHAPGPPFNAASYYYPKGIYYVMDYFKTTYGDPLIYVTENGFSTPGDEDFEKATADYKRIDYLCSHLCFLSKVIKEKNVNVKGYFAWSLGDNYEFCNGFTVRFGLSYVDFANITGDRDLKASGKWFQKFINVTDEDSTNQDLLRSSVSSKNRDRKSLADA.

The signal sequence occupies residues 1–19 (MKLLMLAFVFLLALATCKG). 3 disulfide bridges follow: cysteine 24–cysteine 449, cysteine 32–cysteine 445, and cysteine 224–cysteine 232. Asparagine 33 is a glycosylation site (N-linked (GlcNAc...) asparagine). Glutamine 57 lines the a beta-D-glucoside pocket. Residue asparagine 108 is glycosylated (N-linked (GlcNAc...) asparagine). Residue histidine 159 participates in a beta-D-glucoside binding. N-linked (GlcNAc...) asparagine glycosylation is present at asparagine 175. Position 204–205 (204–205 (NQ)) interacts with a beta-D-glucoside. N-linked (GlcNAc...) asparagine glycosylation occurs at asparagine 236. Tyrosine 348 contacts a beta-D-glucoside. N-linked (GlcNAc...) asparagine glycosylation is found at asparagine 356 and asparagine 379. Residues glutamate 420, tryptophan 468, 475-476 (EF), and phenylalanine 484 each bind a beta-D-glucoside. Glutamate 420 serves as the catalytic Nucleophile. Residues asparagine 493 and asparagine 512 are each glycosylated (N-linked (GlcNAc...) asparagine).

Belongs to the glycosyl hydrolase 1 family. In terms of assembly, homodimer. In terms of tissue distribution, expressed in guard cells, phloem-associated cells and myrosin cells.

The protein localises to the vacuole. The enzyme catalyses a thioglucoside + H2O = a sugar + a thiol.. It carries out the reaction Hydrolysis of terminal, non-reducing beta-D-glucosyl residues with release of beta-D-glucose.. Degradation of glucosinolates (glucose residue linked by a thioglucoside bound to an amino acid derivative) to glucose, sulfate and any of the products: thiocyanates, isothiocyanates, nitriles, epithionitriles or oxazolidine-2-thiones. These toxic degradation products can deter insect herbivores. Seems to function in abscisic acid (ABA) and methyl jasmonate (MeJA) signaling in guard cells. Functionally redundant with TGG2. Hydrolyzes sinigrin and, with lower efficiency, p-nitrophenyl beta-D-glucoside. This Arabidopsis thaliana (Mouse-ear cress) protein is Myrosinase 1.